The sequence spans 239 residues: Ribonuclease PH (239 aa).

Phosphate contacts are provided by residues Arg88 and 126-128 (GTR).

The protein belongs to the RNase PH family. In terms of assembly, homohexameric ring arranged as a trimer of dimers.

The enzyme catalyses tRNA(n+1) + phosphate = tRNA(n) + a ribonucleoside 5'-diphosphate. Phosphorolytic 3'-5' exoribonuclease that plays an important role in tRNA 3'-end maturation. Removes nucleotide residues following the 3'-CCA terminus of tRNAs; can also add nucleotides to the ends of RNA molecules by using nucleoside diphosphates as substrates, but this may not be physiologically important. Probably plays a role in initiation of 16S rRNA degradation (leading to ribosome degradation) during starvation. The chain is Ribonuclease PH from Coxiella burnetii (strain Dugway 5J108-111).